The chain runs to 208 residues: Small ribosomal subunit protein uS4 (208 aa).

In terms of domain architecture, S4 RNA-binding spans Arg95–Asn157.

It belongs to the universal ribosomal protein uS4 family. Part of the 30S ribosomal subunit. Contacts protein S5. The interaction surface between S4 and S5 is involved in control of translational fidelity.

Its function is as follows. One of the primary rRNA binding proteins, it binds directly to 16S rRNA where it nucleates assembly of the body of the 30S subunit. Functionally, with S5 and S12 plays an important role in translational accuracy. The sequence is that of Small ribosomal subunit protein uS4 from Borreliella burgdorferi (strain ATCC 35210 / DSM 4680 / CIP 102532 / B31) (Borrelia burgdorferi).